The sequence spans 469 residues: 3-isopropylmalate dehydratase large subunit (469 aa).

Residues cysteine 347, cysteine 408, and cysteine 411 each coordinate [4Fe-4S] cluster.

This sequence belongs to the aconitase/IPM isomerase family. LeuC type 1 subfamily. Heterodimer of LeuC and LeuD. [4Fe-4S] cluster serves as cofactor.

The enzyme catalyses (2R,3S)-3-isopropylmalate = (2S)-2-isopropylmalate. It participates in amino-acid biosynthesis; L-leucine biosynthesis; L-leucine from 3-methyl-2-oxobutanoate: step 2/4. Its function is as follows. Catalyzes the isomerization between 2-isopropylmalate and 3-isopropylmalate, via the formation of 2-isopropylmaleate. This Haemophilus influenzae (strain PittEE) protein is 3-isopropylmalate dehydratase large subunit.